The chain runs to 643 residues: Pseudouridylate synthase PUS7L (643 aa).

Catalysis depends on aspartate 284, which acts as the Nucleophile. The TRUD domain maps to 370–597 (GFVNYYGPQR…PGCYRPLLAK (228 aa)).

The protein belongs to the pseudouridine synthase TruD family.

The enzyme catalyses a uridine in mRNA = a pseudouridine in mRNA. Its function is as follows. Pseudouridine synthase that catalyzes pseudouridylation of mRNAs. This Danio rerio (Zebrafish) protein is Pseudouridylate synthase PUS7L (pus7l).